Consider the following 900-residue polypeptide: Isoleucine--tRNA ligase (900 aa).

The short motif at 58 to 68 (PYANGNIHIGH) is the 'HIGH' region element. Position 552 (Glu552) interacts with L-isoleucyl-5'-AMP. The 'KMSKS' region signature appears at 593–597 (KMSKS). Lys596 provides a ligand contact to ATP.

The protein belongs to the class-I aminoacyl-tRNA synthetase family. IleS type 1 subfamily. In terms of assembly, monomer.

It is found in the cytoplasm. The catalysed reaction is tRNA(Ile) + L-isoleucine + ATP = L-isoleucyl-tRNA(Ile) + AMP + diphosphate. Catalyzes the attachment of isoleucine to tRNA(Ile). As IleRS can inadvertently accommodate and process structurally similar amino acids such as valine, to avoid such errors it has two additional distinct tRNA(Ile)-dependent editing activities. One activity is designated as 'pretransfer' editing and involves the hydrolysis of activated Val-AMP. The other activity is designated 'posttransfer' editing and involves deacylation of mischarged Val-tRNA(Ile). In Ureaplasma parvum serovar 3 (strain ATCC 700970), this protein is Isoleucine--tRNA ligase.